Reading from the N-terminus, the 634-residue chain is Chaperone protein HtpG (634 aa).

The interval 1–344 is a; substrate-binding; the sequence is MSETVSQNKE…SNDLPLNVSR (344 aa). Residues 345–561 form a b region; that stretch reads EILQDNKVTQ…DYEMGTQMAK (217 aa). Positions 562 to 634 are c; it reads LLAAAGQAVP…GAINKLLTKV (73 aa).

It belongs to the heat shock protein 90 family. Homodimer.

The protein localises to the cytoplasm. In terms of biological role, molecular chaperone. Has ATPase activity. This chain is Chaperone protein HtpG, found in Vibrio parahaemolyticus serotype O3:K6 (strain RIMD 2210633).